Reading from the N-terminus, the 178-residue chain is ATP-dependent protease subunit HslV (178 aa).

Threonine 5 is a catalytic residue. The Na(+) site is built by glycine 161, cysteine 164, and threonine 167.

The protein belongs to the peptidase T1B family. HslV subfamily. As to quaternary structure, a double ring-shaped homohexamer of HslV is capped on each side by a ring-shaped HslU homohexamer. The assembly of the HslU/HslV complex is dependent on binding of ATP.

Its subcellular location is the cytoplasm. The catalysed reaction is ATP-dependent cleavage of peptide bonds with broad specificity.. With respect to regulation, allosterically activated by HslU binding. Functionally, protease subunit of a proteasome-like degradation complex believed to be a general protein degrading machinery. This is ATP-dependent protease subunit HslV from Aliarcobacter butzleri (strain RM4018) (Arcobacter butzleri).